The sequence spans 158 residues: NADPH-dependent 7-cyano-7-deazaguanine reductase (158 aa).

The active-site Thioimide intermediate is Cys56. The active-site Proton donor is the Asp63. Residues 78-80 (VES) and 97-98 (HE) contribute to the substrate site.

Belongs to the GTP cyclohydrolase I family. QueF type 1 subfamily.

It is found in the cytoplasm. It catalyses the reaction 7-aminomethyl-7-carbaguanine + 2 NADP(+) = 7-cyano-7-deazaguanine + 2 NADPH + 3 H(+). It participates in tRNA modification; tRNA-queuosine biosynthesis. Its function is as follows. Catalyzes the NADPH-dependent reduction of 7-cyano-7-deazaguanine (preQ0) to 7-aminomethyl-7-deazaguanine (preQ1). The protein is NADPH-dependent 7-cyano-7-deazaguanine reductase of Rhodopseudomonas palustris (strain BisB5).